A 335-amino-acid chain; its full sequence is Ketol-acid reductoisomerase (NADP(+)) (335 aa).

A KARI N-terminal Rossmann domain is found at 5-185 (SKIYTDKDSN…GATRAGVIPT (181 aa)). NADP(+) is bound by residues 28 to 31 (YGSQ), Ser-56, and 86 to 89 (DMVQ). His-111 is an active-site residue. Gly-137 provides a ligand contact to NADP(+). The KARI C-terminal knotted domain maps to 186-331 (TFKEETETDL…NQLKDLIQKG (146 aa)). Mg(2+)-binding residues include Asp-194, Glu-198, Glu-230, and Glu-234. Substrate is bound at residue Ser-255.

It belongs to the ketol-acid reductoisomerase family. Requires Mg(2+) as cofactor.

The enzyme catalyses (2R)-2,3-dihydroxy-3-methylbutanoate + NADP(+) = (2S)-2-acetolactate + NADPH + H(+). It carries out the reaction (2R,3R)-2,3-dihydroxy-3-methylpentanoate + NADP(+) = (S)-2-ethyl-2-hydroxy-3-oxobutanoate + NADPH + H(+). The protein operates within amino-acid biosynthesis; L-isoleucine biosynthesis; L-isoleucine from 2-oxobutanoate: step 2/4. Its pathway is amino-acid biosynthesis; L-valine biosynthesis; L-valine from pyruvate: step 2/4. In terms of biological role, involved in the biosynthesis of branched-chain amino acids (BCAA). Catalyzes an alkyl-migration followed by a ketol-acid reduction of (S)-2-acetolactate (S2AL) to yield (R)-2,3-dihydroxy-isovalerate. In the isomerase reaction, S2AL is rearranged via a Mg-dependent methyl migration to produce 3-hydroxy-3-methyl-2-ketobutyrate (HMKB). In the reductase reaction, this 2-ketoacid undergoes a metal-dependent reduction by NADPH to yield (R)-2,3-dihydroxy-isovalerate. The polypeptide is Ketol-acid reductoisomerase (NADP(+)) (Saccharolobus islandicus (strain M.16.27) (Sulfolobus islandicus)).